The chain runs to 170 residues: Small ribosomal subunit protein bS16 (170 aa).

The interval 109–170 (ALAEAEGGPS…AAESEAPAAE (62 aa)) is disordered. Basic and acidic residues predominate over residues 131–150 (AKKDEQPTEKAAEPAAEKAA). Positions 151 to 170 (EPAAEAPAEAAAESEAPAAE) are enriched in low complexity.

It belongs to the bacterial ribosomal protein bS16 family.

In Mycolicibacterium gilvum (strain PYR-GCK) (Mycobacterium gilvum (strain PYR-GCK)), this protein is Small ribosomal subunit protein bS16.